Here is a 310-residue protein sequence, read N- to C-terminus: MIIVTGGAGFIGSNIVKALNDKGITDILVVDNLKDGTKFVNLVDLNIADYMDKEDFLIQIMAGEEFGDVEAIFHEGACSSTTEWDGKYMMDNNYQYSKELLHYCLEREIPFLYASSAATYGGRTSDFIESREYEKPLNVYGYSKFLFDEYVRQILPEANSQIVGFRYFNVYGPREGHKGSMASVAFHLNTQLNNGESPKLFEGSENFKRDFVYVGDVADVNLWFLENGVSGIFNLGTGRAESFQAVADATLAYHKKGQIEYIPFPDKLKGRYQAFTQADLTNLRAAGYDKPFKTVAEGVTEYMAWLNRDA.

NADP(+) contacts are provided by residues 10–11 (FI), 31–32 (DN), Lys38, Lys53, 75–79 (EGACS), and Asn92. Tyr140 serves as the catalytic Proton acceptor. Lys144 contacts NADP(+). A substrate-binding site is contributed by Asn169. Val170 and Lys178 together coordinate NADP(+). Lys178 acts as the Proton acceptor in catalysis. Residues Ser180, His187, 201–204 (FEGS), and Arg209 contribute to the substrate site. Lys267 carries the N6-acetyllysine modification. Tyr272 lines the substrate pocket.

The protein belongs to the NAD(P)-dependent epimerase/dehydratase family. HldD subfamily. In terms of assembly, homopentamer. NADP(+) is required as a cofactor. The cofactor is NAD(+).

The enzyme catalyses ADP-D-glycero-beta-D-manno-heptose = ADP-L-glycero-beta-D-manno-heptose. Its pathway is nucleotide-sugar biosynthesis; ADP-L-glycero-beta-D-manno-heptose biosynthesis; ADP-L-glycero-beta-D-manno-heptose from D-glycero-beta-D-manno-heptose 7-phosphate: step 4/4. It functions in the pathway bacterial outer membrane biogenesis; LPS core biosynthesis. Completely inhibited by ADP and ADP-glucose, and partially inhibited by ATP and NADH. Functionally, catalyzes the interconversion between ADP-D-glycero-beta-D-manno-heptose and ADP-L-glycero-beta-D-manno-heptose via an epimerization at carbon 6 of the heptose. The protein is ADP-L-glycero-D-manno-heptose-6-epimerase (hldD) of Escherichia coli (strain K12).